Consider the following 693-residue polypeptide: Elongation factor G 1 (693 aa).

Residues 4 to 281 (NKLRNIGISA…AVTRFLPSPH (278 aa)) form the tr-type G domain. GTP is bound by residues 13-20 (AHIDSGKT), 80-84 (DTPGH), and 134-137 (NKCD).

It belongs to the TRAFAC class translation factor GTPase superfamily. Classic translation factor GTPase family. EF-G/EF-2 subfamily.

The protein resides in the cytoplasm. Its function is as follows. Catalyzes the GTP-dependent ribosomal translocation step during translation elongation. During this step, the ribosome changes from the pre-translocational (PRE) to the post-translocational (POST) state as the newly formed A-site-bound peptidyl-tRNA and P-site-bound deacylated tRNA move to the P and E sites, respectively. Catalyzes the coordinated movement of the two tRNA molecules, the mRNA and conformational changes in the ribosome. This is Elongation factor G 1 from Borrelia garinii subsp. bavariensis (strain ATCC BAA-2496 / DSM 23469 / PBi) (Borreliella bavariensis).